The following is a 407-amino-acid chain: D-3-phosphoglycerate dehydrogenase (407 aa).

Residues 161–162 (HI), Asp-181, 238–240 (ASR), and Asp-264 each bind NAD(+). Arg-240 is an active-site residue. Glu-269 is a catalytic residue. His-292 acts as the Proton donor in catalysis. An NAD(+)-binding site is contributed by 292 to 295 (HIGG). One can recognise an ACT domain in the interval 340-407 (RILNIHNNKP…PNSIKTRVLY (68 aa)).

Belongs to the D-isomer specific 2-hydroxyacid dehydrogenase family.

It carries out the reaction (2R)-3-phosphoglycerate + NAD(+) = 3-phosphooxypyruvate + NADH + H(+). The catalysed reaction is (R)-2-hydroxyglutarate + NAD(+) = 2-oxoglutarate + NADH + H(+). Its pathway is amino-acid biosynthesis; L-serine biosynthesis; L-serine from 3-phospho-D-glycerate: step 1/3. Catalyzes the reversible oxidation of 3-phospho-D-glycerate to 3-phosphonooxypyruvate, the first step of the phosphorylated L-serine biosynthesis pathway. Also catalyzes the reversible oxidation of 2-hydroxyglutarate to 2-oxoglutarate. The polypeptide is D-3-phosphoglycerate dehydrogenase (serA) (Dictyostelium discoideum (Social amoeba)).